The primary structure comprises 191 residues: UPF0302 protein USA300HOU_1400 (191 aa).

Belongs to the UPF0302 family.

In Staphylococcus aureus (strain USA300 / TCH1516), this protein is UPF0302 protein USA300HOU_1400.